The primary structure comprises 407 residues: Putative serine/threonine-protein kinase C01C4.3 (407 aa).

The span at 33–57 (NQLQNHPPRNATQSPQRQPRTSESS) shows a compositional bias: polar residues. A disordered region spans residues 33–68 (NQLQNHPPRNATQSPQRQPRTSESSMDFPRSALRRN). In terms of domain architecture, Protein kinase spans 126 to 397 (YTVNKQLGTG…RKCLAKEKLL (272 aa)). Residues 132–140 (LGTGRFGFI) and lysine 155 each bind ATP. Asparagine 251 acts as the Proton acceptor in catalysis.

This sequence belongs to the protein kinase superfamily. Ser/Thr protein kinase family.

The catalysed reaction is L-seryl-[protein] + ATP = O-phospho-L-seryl-[protein] + ADP + H(+). It catalyses the reaction L-threonyl-[protein] + ATP = O-phospho-L-threonyl-[protein] + ADP + H(+). This Caenorhabditis elegans protein is Putative serine/threonine-protein kinase C01C4.3.